The chain runs to 30 residues: U5-ctenitoxin-Pk1b (30 aa).

Disulfide bonds link Cys6/Cys23 and Cys13/Cys29.

The protein belongs to the neurotoxin 04 (omega-agtx) family. 02 (Tx1) subfamily. As to expression, expressed by the venom gland.

The protein localises to the secreted. Its function is as follows. Lethal neurotoxin. Causes spastic paralysis and death in mice in 4-6 minutes after intracerebroventricular injection at dose levels of 1.5 ug per mouse. This chain is U5-ctenitoxin-Pk1b, found in Phoneutria keyserlingi (Brazilian wandering spider).